The sequence spans 826 residues: MARLCRRVPCTLLLGLAVVLLKARLVPAAARAELSRSDLSLIQQQQQQQQQQQQQQKQLEEAEEERTEVPGATSTLTVPVSVFMLKVQVNDIISRQYLSQAVVEVFVNYTKTNSTVTKSNGAVLIKVPYKLGLSLTIIAYKDGYVLTPLPWKTRRMPIYSSVTLSLFPQSQANIWLFEDTVLITGKLADAKSQPSVQFSKALIKLPDNHHISNVTGYLTVLQQFLKVDNFLHTTGITLNKPGFENIELTPLAAICVKIYSGGKELKVNGSIQVSLPLLRLNDISAGDRIPAWTFDMNTGAWVNHGRGMVKEHNNHLIWTYDAPHLGYWIAAPLPGTRGSGINEDSKDITAYHTVFLTAILGGTIVIVIGFFAVLLCYCRDKCGTPQKRERNITKLEVLKRDQTTSTTHINHISTVKVALKAEDKSQLFNAKNSSYSPQKKEPSKAETEERVSMVKTRDDFKIYNEDVSFLSVNQNNYSRNPTQSLEPNVGSKQPKHINNNLSSSLGDAQDEKRYLTGNEEAYGRSHIPEQLMHIYSQPIAILQTSDLFSTPEQLHTAKSATLPRKGQLVYGQLMEPVNRENFTQTLPKMPIHSHAQPPDAREEDIILEGQQSLPSQASDWSRYSSSLLESVSVPGTLNEAVVMTPFSSELQGISEQTLLELSKGKPSPHPRAWFVSLDGKPVAQVRHSFIDLKKGKRTQSNDTSLDSGVDMNELHSSRKLEREKTFIKSMHQPKILYLEDLDLSSSESGTTVCSPEDPALRHILDGGSGVIMEHPGEESPGRKSTVEDFEANTSPTKRRGRPPLAKRDSKTNIWKKREERPLIPIN.

Residues 1 to 32 (MARLCRRVPCTLLLGLAVVLLKARLVPAAARA) form the signal peptide. Residues 33-353 (ELSRSDLSLI…DSKDITAYHT (321 aa)) lie on the Extracellular side of the membrane. A disordered region spans residues 52-71 (QQQQQKQLEEAEEERTEVPG). 4 N-linked (GlcNAc...) asparagine glycosylation sites follow: Asn-108, Asn-113, Asn-213, and Asn-268. The helical transmembrane segment at 354 to 374 (VFLTAILGGTIVIVIGFFAVL) threads the bilayer. Over 375 to 826 (LCYCRDKCGT…REERPLIPIN (452 aa)) the chain is Cytoplasmic. 3 disordered regions span residues 429-448 (NAKN…AETE), 474-493 (QNNY…GSKQ), and 774-826 (HPGE…IPIN). Basic and acidic residues predominate over residues 438–448 (QKKEPSKAETE). Residues 474–486 (QNNYSRNPTQSLE) are compositionally biased toward polar residues. Residues 774–786 (HPGEESPGRKSTV) are compositionally biased toward basic and acidic residues. Ser-794 bears the Phosphoserine mark. Over residues 805–826 (AKRDSKTNIWKKREERPLIPIN) the composition is skewed to basic and acidic residues.

It belongs to the FAM171 family.

The protein resides in the cytoplasmic granule. The protein localises to the membrane. This is Protein FAM171B (FAM171B) from Homo sapiens (Human).